Reading from the N-terminus, the 137-residue chain is Large-conductance mechanosensitive channel (137 aa).

Transmembrane regions (helical) follow at residues 15–35 (IDLAIGVIIGGAFGGLVNSIV), 38–58 (IFMPIIGLITGGIDFSNMFIQ), and 80–100 (GNFITLLINFLIIAWVLFLFV).

This sequence belongs to the MscL family. Homopentamer.

It localises to the cell inner membrane. Functionally, channel that opens in response to stretch forces in the membrane lipid bilayer. May participate in the regulation of osmotic pressure changes within the cell. This is Large-conductance mechanosensitive channel from Bartonella henselae (strain ATCC 49882 / DSM 28221 / CCUG 30454 / Houston 1) (Rochalimaea henselae).